A 77-amino-acid chain; its full sequence is Conotoxin Ar5.1 a (77 aa).

Residues 1–19 (MLCLPVFIILLLLASPAAS) form the signal peptide. A propeptide spanning residues 20–44 (NPLETRIQSDLIRAALEDADMKNEK) is cleaved from the precursor.

It belongs to the conotoxin T superfamily. Post-translationally, contains 2 disulfide bonds that can be either 'C1-C3, C2-C4' or 'C1-C4, C2-C3', since these disulfide connectivities have been observed for conotoxins with cysteine framework V (for examples, see AC P0DQQ7 and AC P81755). Expressed by the venom duct.

It is found in the secreted. This chain is Conotoxin Ar5.1 a, found in Conus arenatus (Sand-dusted cone).